The chain runs to 311 residues: Protein translocase subunit SecF (311 aa).

6 helical membrane passes run 23-42 (VSYS…ISIY), 140-160 (IEAG…YIGV), 164-184 (WYFG…ALGF), 194-214 (LSTI…SVVI), 246-266 (ILTV…GGKA), and 272-292 (VLVF…SAPI).

The protein belongs to the SecD/SecF family. SecF subfamily. As to quaternary structure, forms a complex with SecD. Part of the essential Sec protein translocation apparatus which comprises SecA, SecYEG and auxiliary proteins SecDF-YajC and YidC.

It localises to the cell inner membrane. Its function is as follows. Part of the Sec protein translocase complex. Interacts with the SecYEG preprotein conducting channel. SecDF uses the proton motive force (PMF) to complete protein translocation after the ATP-dependent function of SecA. The polypeptide is Protein translocase subunit SecF (Rickettsia prowazekii (strain Madrid E)).